The primary structure comprises 388 residues: MKTATFSTLLALSASAVNAQVSGTAFGFAAGTTGGGSAAPETPSSIDELVEWLTDDTARTIMIDRTWDFTGTEGTTDGQCCSTRTTTCEGGTSAGQAWIQDTCDDGTWVSCTYDNAAKNPINVGSNKSIVGVGSDGVLKGKGLRITGGNSNVIIQNIHITDLNPQYVWGGDAITLDDADLVWIDHNKISLIGRQFIVSGWGKAGRVTISNNEFDGVTDWSAGCNGKHYWTLLLIGEQDFYTFSDNWVHDVSGRAPHMGTDMTESTIFFHGVNNYFQNIGGHAFDIDTNTWALLEGNYFESVDTPLTETSLTSGALIYNVPTVDSASACTSPLGYICEWNRLAGSGTWTERTDADVLTMASQYIDSLIDHIPVADVPTTVVANAGVGKL.

An N-terminal signal peptide occupies residues 1-19 (MKTATFSTLLALSASAVNA). The cysteines at positions 80 and 103 are disulfide-linked. N-linked (GlcNAc...) asparagine glycosylation is present at asparagine 126. Arginine 253 is an active-site residue. A disulfide bond links cysteine 328 and cysteine 336.

This sequence belongs to the polysaccharide lyase 1 family.

It is found in the secreted. The catalysed reaction is Eliminative cleavage of (1-&gt;4)-alpha-D-galacturonan methyl ester to give oligosaccharides with 4-deoxy-6-O-methyl-alpha-D-galact-4-enuronosyl groups at their non-reducing ends.. Its function is as follows. Pectinolytic enzymes consist of four classes of enzymes: pectin lyase, polygalacturonase, pectin methylesterase and rhamnogalacturonase. Among pectinolytic enzymes, pectin lyase is the most important in depolymerization of pectin, since it cleaves internal glycosidic bonds of highly methylated pectins. In Aspergillus terreus (strain NIH 2624 / FGSC A1156), this protein is Probable pectin lyase F-1 (pelF-1).